A 1468-amino-acid polypeptide reads, in one-letter code: Neuropathy target esterase sws (1468 aa).

Topologically, residues 1 to 34 (MDVLEMLRASASGSYNTIFSDAWCQYVSKQITAT) are lumenal. Residues 35–55 (VYMYCALVMMSLLFIAWFLYF) traverse the membrane as a helical segment. The Cytoplasmic portion of the chain corresponds to 56–1468 (KRMARLRLRD…RSSPNNETKN (1413 aa)). Residue 174–301 (IFGHFEKPVF…IRVIQVIMIR (128 aa)) participates in a nucleoside 3',5'-cyclic phosphate binding. Composition is skewed to polar residues over residues 332-348 (TMSG…SRQA) and 357-366 (NQLNLMQSAA). The segment at 332–411 (TMSGPINSQT…DGSFHGTTNL (80 aa)) is disordered. Phosphoserine occurs at positions 442 and 451. A nucleoside 3',5'-cyclic phosphate is bound by residues 480–607 (ELGL…VVRR) and 596–723 (IVLD…LSHR). One can recognise a PNPLA domain in the interval 950–1116 (LVLGGGGARG…VNNLPGHLWR (167 aa)). Residues 954–959 (GGGARG) carry the GXGXXG motif. Positions 981-985 (GVSIG) match the GXSXG motif. Ser983 acts as the Nucleophile in catalysis. Asp1103 acts as the Proton acceptor in catalysis. The DGA/G motif lies at 1103–1105 (DGG). Ser1197 is subject to Phosphoserine. The segment at 1368-1468 (ERKMDKSTQS…RSSPNNETKN (101 aa)) is disordered. Positions 1374 to 1383 (STQSSPPTSS) are enriched in low complexity. A compositionally biased stretch (basic and acidic residues) spans 1385–1395 (TDMRGKEEAKH). Positions 1419–1441 (TQTGQEQELQQQQKLQQLQQDQG) are enriched in low complexity. Residues 1446–1459 (QLVDKDKEEDKENR) show a composition bias toward basic and acidic residues.

This sequence belongs to the NTE family. As to quaternary structure, interacts with Pka-C3; interaction inhibits the catalytic function of Pka-C3 and the esterase activity of sws.

It is found in the endoplasmic reticulum membrane. The catalysed reaction is a 1-acyl-sn-glycero-3-phosphocholine + H2O = sn-glycerol 3-phosphocholine + a fatty acid + H(+). Phospholipase B that deacylates intracellular phosphatidylcholine (PtdCho), generating glycerophosphocholine (GroPtdCho). This deacylation occurs at both sn-2 and sn-1 positions of PtdCho. Its specific chemical modification by certain organophosphorus (OP) compounds leads to distal axonopathy. Plays a role in the signaling mechanism between neurons and glia that regulates glia wrapping during development of the adult brain. Essential for membrane lipid homeostasis and cell survival in both neurons and glia of the adult brain. The protein is Neuropathy target esterase sws of Drosophila sechellia (Fruit fly).